We begin with the raw amino-acid sequence, 208 residues long: NAD(P)H-hydrate epimerase (208 aa).

In terms of domain architecture, YjeF N-terminal spans 10 to 208; the sequence is IRDAERQTLA…TLGVIMTPAN (199 aa). 54-58 contributes to the (6S)-NADPHX binding site; the sequence is NNGGD. Residues asparagine 55 and aspartate 117 each coordinate K(+). Residues 121 to 127 and aspartate 150 contribute to the (6S)-NADPHX site; that span reads GIGLNRP. Serine 153 is a binding site for K(+).

The protein belongs to the NnrE/AIBP family. K(+) is required as a cofactor.

The enzyme catalyses (6R)-NADHX = (6S)-NADHX. It carries out the reaction (6R)-NADPHX = (6S)-NADPHX. In terms of biological role, catalyzes the epimerization of the S- and R-forms of NAD(P)HX, a damaged form of NAD(P)H that is a result of enzymatic or heat-dependent hydration. This is a prerequisite for the S-specific NAD(P)H-hydrate dehydratase to allow the repair of both epimers of NAD(P)HX. The chain is NAD(P)H-hydrate epimerase from Achromobacter xylosoxidans (strain A8).